Consider the following 293-residue polypeptide: Lipoyl synthase (293 aa).

7 residues coordinate [4Fe-4S] cluster: Cys-47, Cys-52, Cys-58, Cys-73, Cys-77, Cys-80, and Ser-285. One can recognise a Radical SAM core domain in the interval Trp-59 to Arg-274.

It belongs to the radical SAM superfamily. Lipoyl synthase family. The cofactor is [4Fe-4S] cluster.

It localises to the cytoplasm. It catalyses the reaction [[Fe-S] cluster scaffold protein carrying a second [4Fe-4S](2+) cluster] + N(6)-octanoyl-L-lysyl-[protein] + 2 oxidized [2Fe-2S]-[ferredoxin] + 2 S-adenosyl-L-methionine + 4 H(+) = [[Fe-S] cluster scaffold protein] + N(6)-[(R)-dihydrolipoyl]-L-lysyl-[protein] + 4 Fe(3+) + 2 hydrogen sulfide + 2 5'-deoxyadenosine + 2 L-methionine + 2 reduced [2Fe-2S]-[ferredoxin]. Its pathway is protein modification; protein lipoylation via endogenous pathway; protein N(6)-(lipoyl)lysine from octanoyl-[acyl-carrier-protein]: step 2/2. Catalyzes the radical-mediated insertion of two sulfur atoms into the C-6 and C-8 positions of the octanoyl moiety bound to the lipoyl domains of lipoate-dependent enzymes, thereby converting the octanoylated domains into lipoylated derivatives. The polypeptide is Lipoyl synthase (Christiangramia forsetii (strain DSM 17595 / CGMCC 1.15422 / KT0803) (Gramella forsetii)).